Consider the following 268-residue polypeptide: Membrane lipoprotein TpN32 (268 aa).

A signal peptide spans 1–23 (MKGKTVSAALVGKLIALSVGVVA). Cys24 is lipidated: N-palmitoyl cysteine. Cys24 is lipidated: S-diacylglycerol cysteine.

Belongs to the NlpA lipoprotein family.

It localises to the cell membrane. The chain is Membrane lipoprotein TpN32 (tpn32) from Treponema pallidum (strain Nichols).